The chain runs to 288 residues: MEIGLREWLIVIGIIVIAGILFDGWRRMRGGKGKLKFRLDRSFSNLPDEEETTSAEVLGPPRVLDTHKEPQLDEHDLPSMSANPRDNKRGAGSEKRGDKKRKDEPQQGDLNLDLDGPSLFTARDDDFPDDKPAQRITEDKDLPPVEEVLVISVISRNEGGFKGPALLQNILESGLRFGEMDIFHRHESMAGNGEVLFSMANAVKPGVFDLDDIDHFSTRAVSFFLGLPGPRRPKQAFDVMVAAARKLAHELDGELKDDQRSVMTAQTIEHYRQRIVEFERRALTQRRG.

Position 1 (Met-1) is a topological domain, periplasmic. A helical transmembrane segment spans residues 2 to 22 (EIGLREWLIVIGIIVIAGILF). Residues 23–288 (DGWRRMRGGK…ERRALTQRRG (266 aa)) are Cytoplasmic-facing. The tract at residues 48–138 (DEEETTSAEV…DDKPAQRITE (91 aa)) is disordered. Composition is skewed to basic and acidic residues over residues 64–77 (LDTH…EHDL), 85–105 (RDNK…KDEP), and 122–138 (ARDD…RITE).

It belongs to the ZipA family. As to quaternary structure, interacts with FtsZ via their C-terminal domains.

Its subcellular location is the cell inner membrane. Its function is as follows. Essential cell division protein that stabilizes the FtsZ protofilaments by cross-linking them and that serves as a cytoplasmic membrane anchor for the Z ring. Also required for the recruitment to the septal ring of downstream cell division proteins. The polypeptide is Cell division protein ZipA (Pseudomonas syringae pv. tomato (strain ATCC BAA-871 / DC3000)).